The following is a 382-amino-acid chain: Neuropeptide Y receptor type 1 (382 aa).

Residues 1 to 33 are Extracellular-facing; it reads MNSTSFSQVENHSIFCNFSENSQFLAFESDDCH. N-linked (GlcNAc...) asparagine glycans are attached at residues asparagine 2, asparagine 11, and asparagine 17. Residues 34–54 traverse the membrane as a helical segment; the sequence is LPLAMIFTLALAYGAVIILGV. At 55–75 the chain is on the cytoplasmic side; sequence TGNLALIMIILKQKEMRNVTN. Residues 76–96 form a helical membrane-spanning segment; the sequence is ILIVNLSFSDLLVAIMCLPFT. The Extracellular segment spans residues 97–115; that stretch reads FVYTLMDHWVFGEAMCKLN. An intrachain disulfide couples cysteine 112 to cysteine 197. A helical transmembrane segment spans residues 116–136; sequence PFVQCVSITVSIFSLVLIAVE. Residues 137-153 are Cytoplasmic-facing; that stretch reads RHQLIINPRGWRPNNRH. A helical transmembrane segment spans residues 154 to 174; sequence AYVGIAVIWVLAVVSSLPFLI. Residues 175 to 210 lie on the Extracellular side of the membrane; the sequence is YQVLTDEPFQNVTLDAFKDKYVCFDKFPSDSHRLSY. Residue asparagine 185 is glycosylated (N-linked (GlcNAc...) asparagine). A helical transmembrane segment spans residues 211-231; the sequence is TTLLLMLQYFGPLCFIFICYF. The Cytoplasmic segment spans residues 232–259; sequence KIYIRLKRRNNMMDKMRDNKYRSSETKR. A helical membrane pass occupies residues 260 to 280; it reads INIMLLSIVVAFAVCWLPLTI. Residues 281 to 298 lie on the Extracellular side of the membrane; sequence FNTVFDWNHQIIATCNHN. A helical transmembrane segment spans residues 299–319; the sequence is LLFLLCHLTAMISTCVNPIFY. Residues 320-382 lie on the Cytoplasmic side of the membrane; it reads GFLNKNFQRD…KINNDDNEKI (63 aa). Cysteine 337 carries S-palmitoyl cysteine lipidation. Serine 367 bears the Phosphoserine mark.

The protein belongs to the G-protein coupled receptor 1 family.

It localises to the cell membrane. In terms of biological role, receptor for neuropeptide Y and peptide YY. This is Neuropeptide Y receptor type 1 (NPY1R) from Canis lupus familiaris (Dog).